A 300-amino-acid polypeptide reads, in one-letter code: Large ribosomal subunit protein bL9m (300 aa).

The protein belongs to the bacterial ribosomal protein bL9 family. In terms of assembly, component of the mitochondrial large ribosomal subunit (mt-LSU). Mature N.crassa 74S mitochondrial ribosomes consist of a small (37S) and a large (54S) subunit. The 37S small subunit contains a 16S ribosomal RNA (16S mt-rRNA) and 32 different proteins. The 54S large subunit contains a 23S rRNA (23S mt-rRNA) and 42 different proteins.

It localises to the mitochondrion. Its function is as follows. Component of the mitochondrial ribosome (mitoribosome), a dedicated translation machinery responsible for the synthesis of mitochondrial genome-encoded proteins, including at least some of the essential transmembrane subunits of the mitochondrial respiratory chain. The mitoribosomes are attached to the mitochondrial inner membrane and translation products are cotranslationally integrated into the membrane. The sequence is that of Large ribosomal subunit protein bL9m (mrpl50) from Neurospora crassa (strain ATCC 24698 / 74-OR23-1A / CBS 708.71 / DSM 1257 / FGSC 987).